The primary structure comprises 158 residues: Cyclic pyranopterin monophosphate synthase (158 aa).

Substrate-binding positions include L75–H77 and M113–E114. Residue D128 is part of the active site.

The protein belongs to the MoaC family. Homohexamer; trimer of dimers.

It catalyses the reaction (8S)-3',8-cyclo-7,8-dihydroguanosine 5'-triphosphate = cyclic pyranopterin phosphate + diphosphate. The protein operates within cofactor biosynthesis; molybdopterin biosynthesis. Its function is as follows. Catalyzes the conversion of (8S)-3',8-cyclo-7,8-dihydroguanosine 5'-triphosphate to cyclic pyranopterin monophosphate (cPMP). This chain is Cyclic pyranopterin monophosphate synthase, found in Polynucleobacter asymbioticus (strain DSM 18221 / CIP 109841 / QLW-P1DMWA-1) (Polynucleobacter necessarius subsp. asymbioticus).